Consider the following 143-residue polypeptide: Large ribosomal subunit protein uL11 (143 aa).

It belongs to the universal ribosomal protein uL11 family. In terms of assembly, part of the ribosomal stalk of the 50S ribosomal subunit. Interacts with L10 and the large rRNA to form the base of the stalk. L10 forms an elongated spine to which L12 dimers bind in a sequential fashion forming a multimeric L10(L12)X complex. One or more lysine residues are methylated.

In terms of biological role, forms part of the ribosomal stalk which helps the ribosome interact with GTP-bound translation factors. The sequence is that of Large ribosomal subunit protein uL11 from Pseudomonas putida (strain ATCC 700007 / DSM 6899 / JCM 31910 / BCRC 17059 / LMG 24140 / F1).